The chain runs to 167 residues: Small heat shock protein C1 (167 aa).

Positions 59 to 167 (SLYESNSIKS…EQEAREIVID (109 aa)) constitute a sHSP domain.

It belongs to the small heat shock protein (HSP20) family.

The polypeptide is Small heat shock protein C1 (hspC1) (Rickettsia conorii (strain ATCC VR-613 / Malish 7)).